The following is a 345-amino-acid chain: Phosphate acyltransferase (345 aa).

This sequence belongs to the PlsX family. As to quaternary structure, homodimer. Probably interacts with PlsY.

It is found in the cytoplasm. It carries out the reaction a fatty acyl-[ACP] + phosphate = an acyl phosphate + holo-[ACP]. It functions in the pathway lipid metabolism; phospholipid metabolism. Functionally, catalyzes the reversible formation of acyl-phosphate (acyl-PO(4)) from acyl-[acyl-carrier-protein] (acyl-ACP). This enzyme utilizes acyl-ACP as fatty acyl donor, but not acyl-CoA. The protein is Phosphate acyltransferase of Nitratidesulfovibrio vulgaris (strain ATCC 29579 / DSM 644 / CCUG 34227 / NCIMB 8303 / VKM B-1760 / Hildenborough) (Desulfovibrio vulgaris).